Here is a 436-residue protein sequence, read N- to C-terminus: MSVKRRDHILIPKNPDAPLPSLKIEEVGECTIDNIYASPEPFVNGMTMKLSAVKNHGIERDSGEVELAGPMEKIFYNPETTKVAIVTCGGLCPGLNNVIRGLVLNLYNRYHVNNIFGLRWGYEGLVPELSEVQRLTPEIVSDIHQKGGSILGTSRGAQSPEVMAQFLIDNNFNILFTLGGDGTLRGANAINKELRRRKVPITVVGIPKTIDNDICYTDSTFGFQTAVGLSQEAINAVHSEAKSAKNGIGIVRLMGRDAGFIALYASLANGDANLVLIPEIDIPITQICEFVGKRIMSKGHVVIVVAEGALQNQKPKDLDLGTDKSGNILHWDSINYLRDSITKYLKSIGIEEHTIKFVDPSYMIRSAPCSAADAHFCMCLANAAVHVAMAGKTGLVICHHHNNFVSVPIDRTSYYIKRVNTDGPLYTMMTAIEKPK.

Residues Gly-90, 155–156 (RG), and 180–183 (GDGT) contribute to the ATP site. Asp-181 provides a ligand contact to Mg(2+). Residues 209–211 (TID), 254–256 (MGR), Glu-307, and 362–365 (YMIR) each bind substrate. Asp-211 (proton acceptor) is an active-site residue.

Belongs to the phosphofructokinase type A (PFKA) family. PPi-dependent PFK group II subfamily. Atypical ATP-dependent clade 'X' sub-subfamily. As to quaternary structure, homodimer. Aggregates to a homotetramer after activation by ATP. It depends on Mg(2+) as a cofactor.

It localises to the cytoplasm. The enzyme catalyses beta-D-fructose 6-phosphate + ATP = beta-D-fructose 1,6-bisphosphate + ADP + H(+). It functions in the pathway carbohydrate degradation; glycolysis; D-glyceraldehyde 3-phosphate and glycerone phosphate from D-glucose: step 3/4. Its activity is regulated as follows. Activated by nucleoside triphosphates. Inhibited by phosphoenolpyruvate. EDTA and biphosphonates play the role of inhibitors of kinase activity. In terms of biological role, catalyzes the phosphorylation of D-fructose 6-phosphate to fructose 1,6-bisphosphate by ATP, the first committing step of glycolysis. This chain is ATP-dependent 6-phosphofructokinase (PPi-PFK), found in Entamoeba histolytica (strain ATCC 30459 / HM-1:IMSS / ABRM).